We begin with the raw amino-acid sequence, 372 residues long: Peptidyl-prolyl cis-trans isomerase D (372 aa).

The PPIase cyclophilin-type domain maps to 14-178 (YFDISIGGKS…KEALIVDCGE (165 aa)). 3 TPR repeats span residues 219 to 252 (AKASKDYGNTAFKSGNYSLGLDKYQKGLRYINEE), 271 to 304 (FSLNNNSALLNIKLEAWDDAARSASAALEVGGVK), and 309 to 342 (AKAFYRRGLANIHLKDEEAAVRDLTEANKLAPND).

This sequence belongs to the cyclophilin-type PPIase family. PPIase D subfamily.

It is found in the cytoplasm. It carries out the reaction [protein]-peptidylproline (omega=180) = [protein]-peptidylproline (omega=0). Its function is as follows. PPIases accelerate the folding of proteins. It catalyzes the cis-trans isomerization of proline imidic peptide bonds in oligopeptides. This Gibberella zeae (strain ATCC MYA-4620 / CBS 123657 / FGSC 9075 / NRRL 31084 / PH-1) (Wheat head blight fungus) protein is Peptidyl-prolyl cis-trans isomerase D (CPR6).